We begin with the raw amino-acid sequence, 394 residues long: Phosphoglycerate kinase (394 aa).

Substrate contacts are provided by residues 21–23 (DFN), Arg36, 59–62 (HLGR), Arg118, and Arg151. Residue Ser183 is modified to Phosphoserine. Residues Lys201 and Gly292 each contribute to the ATP site. At Thr299 the chain carries Phosphothreonine. ATP is bound by residues Glu323 and 350–353 (GGDS).

It belongs to the phosphoglycerate kinase family. As to quaternary structure, monomer.

Its subcellular location is the cytoplasm. The catalysed reaction is (2R)-3-phosphoglycerate + ATP = (2R)-3-phospho-glyceroyl phosphate + ADP. It participates in carbohydrate degradation; glycolysis; pyruvate from D-glyceraldehyde 3-phosphate: step 2/5. The sequence is that of Phosphoglycerate kinase from Bacillus thuringiensis (strain Al Hakam).